We begin with the raw amino-acid sequence, 293 residues long: Undecaprenyl-diphosphatase (293 aa).

8 consecutive transmembrane segments (helical) span residues 3-23, 43-63, 85-105, 109-129, 178-198, 203-223, 238-258, and 269-289; these read IALA…EFLP, KGKI…CWEF, VNVI…GKWI, LFNP…ILLA, FALV…MLFG, VATE…TVYE, IFAV…RWLL, and FAWY…TGVI.

Belongs to the UppP family.

It localises to the cell inner membrane. It catalyses the reaction di-trans,octa-cis-undecaprenyl diphosphate + H2O = di-trans,octa-cis-undecaprenyl phosphate + phosphate + H(+). Catalyzes the dephosphorylation of undecaprenyl diphosphate (UPP). Confers resistance to bacitracin. The protein is Undecaprenyl-diphosphatase of Cupriavidus metallidurans (strain ATCC 43123 / DSM 2839 / NBRC 102507 / CH34) (Ralstonia metallidurans).